Reading from the N-terminus, the 500-residue chain is Versicolorin B desaturase (500 aa).

The chain crosses the membrane as a helical span at residues 3-23; it reads FLSLPSLVIVIPVGYLLFHLG. Asn-243 and Asn-400 each carry an N-linked (GlcNAc...) asparagine glycan. A heme-binding site is contributed by Cys-438.

Belongs to the cytochrome P450 family. Heme serves as cofactor.

The protein resides in the membrane. The enzyme catalyses versicolorin B + NADPH + O2 + H(+) = versicolorin A + NADP(+) + 2 H2O. It functions in the pathway mycotoxin biosynthesis; aflatoxin biosynthesis. Its function is as follows. Versicolorin B desaturase; part of the gene cluster that mediates the biosynthesis of aflatoxins, a group of polyketide-derived furanocoumarins, and part of the most toxic and carcinogenic compounds among the known mycotoxins. The four major aflatoxins produced by A.parasiticus are aflatoxin B1 (AFB1), aflatoxin B2 (AFB2), aflatoxin G1 (AFG1) and aflatoxin G2 (AFG2). Within the aflatoxin pathway, the versicolorin B desaturase aflL catalyzes the conversion of versicolorin B (VERB) to versicolorin A (VERA). The biosynthesis of aflatoxins begins with the norsolorinic acid synthase aflC that combines a hexanoyl starter unit produced by the fatty acid synthase aflA/aflB and 7 malonyl-CoA extender units to synthesize the precursor NOR. The second step is the conversion of NOR to averantin and requires the norsolorinic acid ketoreductase aflD, which catalyzes the dehydration of norsolorinic acid to form (1'S)-averantin. The norsolorinic acid reductases aflE and aflF may also play a role in the conversion of NOR to AVN. The cytochrome P450 monooxygenase aflG then catalyzes the hydroxylation of AVN to 5'hydroxyaverantin (HAVN). The next step is performed by the 5'-hydroxyaverantin dehydrogenase aflH that transforms HAVN to 5'-oxoaverantin (OAVN) which is further converted to averufin (AVF) by aflK that plays a dual role in the pathway, as a 5'-oxoaverantin cyclase that mediates conversion of 5'-oxoaverantin, as well as a versicolorin B synthase in a later step in the pathway. The averufin oxidase aflI catalyzes the conversion of AVF to versiconal hemiacetal acetate (VHA). VHA is then the substrate for the versiconal hemiacetal acetate esterase aflJ to yield versiconal (VAL). Versicolorin B synthase aflK then converts VAL to versicolorin B (VERB) by closing the bisfuran ring of aflatoxin which is required for DNA-binding, thus giving to aflatoxin its activity as a mutagen. Then, the activity of the versicolorin B desaturase aflL leads to versicolorin A (VERA). A branch point starts from VERB since it can also be converted to dihydrodemethylsterigmatocystin (DMDHST), probably also by aflL, VERA being a precursor for aflatoxins B1 and G1, and DMDHST for aflatoxins B2 and G2. Next, the versicolorin reductase aflM and the cytochrome P450 monooxygenase aflN are involved in conversion of VERA to demethylsterigmatocystin (DMST). AflX and aflY seem also involved in this step, through probable aflX-mediated epoxide ring-opening step following versicolorin A oxidation and aflY-mediated Baeyer-Villiger oxidation required for the formation of the xanthone ring. The methyltransferase aflO then leads to the modification of DMST to sterigmatocystin (ST), and of DMDHST to dihydrosterigmatocystin (DHST). Both ST and DHST are then substrates of the O-methyltransferase aflP to yield O-methylsterigmatocystin (OMST) and dihydro-O-methylsterigmatocystin (DHOMST), respectively. Finally OMST is converted to aflatoxins B1 and G1, and DHOMST to aflatoxins B2 and G2, via the action of several enzymes including O-methylsterigmatocystin oxidoreductase aflQ, the cytochrome P450 monooxygenase aflU, but also the NADH-dependent flavin oxidoreductase nadA which is specifically required for the synthesis of AFG1. In Aspergillus parasiticus (strain ATCC 56775 / NRRL 5862 / SRRC 143 / SU-1), this protein is Versicolorin B desaturase.